A 260-amino-acid chain; its full sequence is Cell division protein DivIB (260 aa).

The Cytoplasmic segment spans residues 1–25 (MGAQDQNGKNHGGLFRDFQNRNVKK). A helical membrane pass occupies residues 26 to 46 (MWPLVMPITIILLVMIFMISS). Residues 47-260 (YSRVKKVTVS…STKTTSVQGY (214 aa)) lie on the Extracellular side of the membrane. A POTRA domain is found at 48–119 (SRVKKVTVSG…NQVKIKVEEY (72 aa)).

The protein belongs to the FtsQ/DivIB family. DivIB subfamily.

Its subcellular location is the cell membrane. In terms of biological role, cell division protein that may be involved in stabilizing or promoting the assembly of the division complex. This is Cell division protein DivIB from Lentilactobacillus buchneri (strain NRRL B-30929) (Lactobacillus buchneri).